The primary structure comprises 142 residues: Glia maturation factor beta (142 aa).

S2 carries the N-acetylserine modification. Positions 4 to 139 (SLVVCDVAED…TEEWLREKLG (136 aa)) constitute an ADF-H domain.

This sequence belongs to the actin-binding proteins ADF family. GMF subfamily. Post-translationally, phosphorylated; stimulated by phorbol ester.

Functionally, this protein causes differentiation of brain cells, stimulation of neural regeneration, and inhibition of proliferation of tumor cells. This is Glia maturation factor beta (Gmfb) from Rattus norvegicus (Rat).